Here is a 215-residue protein sequence, read N- to C-terminus: Peptide methionine sulfoxide reductase MsrA (215 aa).

Cys-57 is a catalytic residue.

It belongs to the MsrA Met sulfoxide reductase family.

It catalyses the reaction L-methionyl-[protein] + [thioredoxin]-disulfide + H2O = L-methionyl-(S)-S-oxide-[protein] + [thioredoxin]-dithiol. The enzyme catalyses [thioredoxin]-disulfide + L-methionine + H2O = L-methionine (S)-S-oxide + [thioredoxin]-dithiol. Its function is as follows. Has an important function as a repair enzyme for proteins that have been inactivated by oxidation. Catalyzes the reversible oxidation-reduction of methionine sulfoxide in proteins to methionine. The sequence is that of Peptide methionine sulfoxide reductase MsrA from Saccharophagus degradans (strain 2-40 / ATCC 43961 / DSM 17024).